Here is a 140-residue protein sequence, read N- to C-terminus: Nucleoside diphosphate kinase (140 aa).

6 residues coordinate ATP: lysine 11, phenylalanine 59, arginine 87, threonine 93, arginine 104, and asparagine 114. Histidine 117 acts as the Pros-phosphohistidine intermediate in catalysis.

It belongs to the NDK family. In terms of assembly, homotetramer. Mg(2+) serves as cofactor.

It is found in the cytoplasm. The enzyme catalyses a 2'-deoxyribonucleoside 5'-diphosphate + ATP = a 2'-deoxyribonucleoside 5'-triphosphate + ADP. It carries out the reaction a ribonucleoside 5'-diphosphate + ATP = a ribonucleoside 5'-triphosphate + ADP. Major role in the synthesis of nucleoside triphosphates other than ATP. The ATP gamma phosphate is transferred to the NDP beta phosphate via a ping-pong mechanism, using a phosphorylated active-site intermediate. The sequence is that of Nucleoside diphosphate kinase from Bradyrhizobium diazoefficiens (strain JCM 10833 / BCRC 13528 / IAM 13628 / NBRC 14792 / USDA 110).